Here is a 197-residue protein sequence, read N- to C-terminus: Allatostatins (197 aa).

An N-terminal signal peptide occupies residues 1 to 27 (MRSRTSVLTSSLAFLYFFGIVGRSALA). Positions 28–56 (MEETPASSMNLQHYNNMLNPMVFDDTMPE) are excised as a propeptide. Isoleucine amide is present on I76. A propeptide spanning residues 80–86 (WIDTNDN) is cleaved from the precursor. A leucine amide mark is found at L96, L106, L154, and L184. The tract at residues 161–197 (YSGGQPLGSKRPNDMLSQRYHFGLGKRMSEDEEESSQ) is disordered. A propeptide spanning residues 188 to 197 (MSEDEEESSQ) is cleaved from the precursor.

It belongs to the allatostatin family.

It is found in the secreted. Neuropeptides. The polypeptide is Allatostatins (Apis mellifera (Honeybee)).